Consider the following 163-residue polypeptide: Staphylokinase (163 aa).

A signal peptide spans 1 to 27; sequence MLKRGLLFLTVLLLLFSFSSITNEVSA.

Belongs to the staphylokinase family.

Its subcellular location is the secreted. In terms of biological role, potent plasminogen activator that converts plasminogen into plasmin. It forms a 1:1 complex with plasmin, which in turn activates other plasminogen molecules. This is Staphylokinase (sak) from Staphylococcus aureus (strain MRSA252).